The following is a 2179-amino-acid chain: Voltage-dependent L-type calcium channel subunit alpha-1D (2179 aa).

Disordered regions lie at residues 1–21 (MMMM…EDHA), 30–49 (TRLP…SKQT), and 64–100 (KAAQ…SSNS). Topologically, residues 1–126 (MMMMMMMKKM…RACISIVEWK (126 aa)) are cytoplasmic. Over residues 38–49 (GPTSQPNSSKQT) the composition is skewed to polar residues. A compositionally biased stretch (basic residues) spans 82-93 (QRKRQQYAKSKK). An I repeat occupies 113–409 (NPIRRACISI…LVLGVLSGEF (297 aa)). The chain crosses the membrane as a helical span at residues 127–145 (PFDIFILLAIFANCVALAI). The Extracellular portion of the chain corresponds to 146–163 (YIPFPEDDSNSTNHNLEK). A helical membrane pass occupies residues 164–183 (VEYAFLIIFTVETFLKIIAY). The Cytoplasmic portion of the chain corresponds to 184-195 (GLLLHPNAYVRN). The chain crosses the membrane as a helical span at residues 196-214 (GWNLLDFVIVIVGLFSVIL). The Extracellular portion of the chain corresponds to 215-235 (EQLTKETEGGNHSSGKSGGFD). A helical transmembrane segment spans residues 236 to 254 (VKALRAFRVLRPLRLVSGV). The Cytoplasmic segment spans residues 255–273 (PSLQVVLNSIIKAMVPLLH). The chain crosses the membrane as a helical span at residues 274–293 (IALLVLFVIIIYAIIGLELF). At 294 to 381 (IGKMHKTCFF…WVNDAIGWEW (88 aa)) the chain is on the extracellular side. Glu364 provides a ligand contact to Ca(2+). Residues 382-406 (PWVYFVSLIILGSFFVLNLVLGVLS) traverse the membrane as a helical segment. The Cytoplasmic portion of the chain corresponds to 407 to 543 (GEFSKEREKA…RRCRAAVKSV (137 aa)). The segment at 429 to 446 (QQLEEDLKGYLDWITQAE) is binding to the beta subunit. Residues 449-480 (DPENEEEGGEEGKRNTSMPTSETESVNTENVS) form a disordered region. The segment covering 463–479 (NTSMPTSETESVNTENV) has biased composition (polar residues). An II repeat occupies 529–775 (NRFNRRRCRA…VFLAIAVDNL (247 aa)). Residues 544–563 (TFYWLVIVLVFLNTLTISSE) form a helical membrane-spanning segment. Residues 564–578 (HYNQPDWLTQIQDIA) lie on the Extracellular side of the membrane. Residues 579 to 597 (NKVLLALFTCEMLVKMYSL) form a helical membrane-spanning segment. Topologically, residues 598-605 (GLQAYFVS) are cytoplasmic. The chain crosses the membrane as a helical span at residues 606-624 (LFNRFDCFVVCGGITETIL). Topologically, residues 625-634 (VELELMSPLG) are extracellular. Residues 635 to 653 (VSVFRCVRLLRIFKVTRHW) form a helical membrane-spanning segment. The Cytoplasmic portion of the chain corresponds to 654–672 (TSLSNLVASLLNSMKSIAS). Residues 673–693 (LLLLLFLFIIIFSLLGMQLFG) traverse the membrane as a helical segment. The Extracellular portion of the chain corresponds to 694–747 (GKFNFDETQTKRSTFDNFPQALLTVFQILTGEDWNAVMYDGIMAYGGPSSSGMI). Glu725 is a binding site for Ca(2+). The chain crosses the membrane as a helical span at residues 748–772 (VCIYFIILFICGNYILLNVFLAIAV). Positions 771–810 (AVDNLADAESLNTAQKEEAEEKERKKIARKESLENKKNNK) form a coiled coil. Topologically, residues 773 to 906 (DNLADAESLN…VGCHKLINHH (134 aa)) are cytoplasmic. A compositionally biased stretch (basic and acidic residues) spans 786–810 (KEEAEEKERKKIARKESLENKKNNK). Residues 786–870 (KEEAEEKERK…AGPRPRRISE (85 aa)) are disordered. Residues 811 to 822 (PEVNQIANSDNK) show a composition bias toward polar residues. The segment covering 845–858 (VGEEEEEEEEDEPE) has biased composition (acidic residues). The III repeat unit spans residues 893–1175 (NPIRVGCHKL…IFVGFVIVTF (283 aa)). Residues 907–925 (IFTNLILVFIMLSSAALAA) traverse the membrane as a helical segment. Residues 926-941 (EDPIRSHSFRNTILGY) are Extracellular-facing. The helical transmembrane segment at 942–961 (FDYAFTAIFTVEILLKMTTF) threads the bilayer. The Cytoplasmic portion of the chain corresponds to 962-973 (GAFLHKGAFCRN). A helical transmembrane segment spans residues 974 to 992 (YFNLLDMLVVGVSLVSFGI). The Extracellular portion of the chain corresponds to 993–998 (QSSAIS). The helical transmembrane segment at 999–1018 (VVKILRVLRVLRPLRAINRA) threads the bilayer. The Cytoplasmic portion of the chain corresponds to 1019 to 1037 (KGLKHVVQCVFVAIRTIGN). A helical transmembrane segment spans residues 1038–1057 (IMIVTTLLQFMFACIGVQLF). Residues 1058-1147 (KGKFYRCTDE…VGPVYNYRVE (90 aa)) are Extracellular-facing. The dihydropyridine binding stretch occupies residues 1095–1185 (RIWQNSDFNF…QEQGEKEYKN (91 aa)). Glu1121 is a Ca(2+) binding site. Residues 1148–1168 (ISIFFIIYIIIVAFFMMNIFV) form a helical membrane-spanning segment. The Cytoplasmic portion of the chain corresponds to 1169–1225 (GFVIVTFQEQGEKEYKNCELDKNQRQCVEYALKARPLRRYIPKNPYQYKFWYVVNSS). Residues 1212–1487 (NPYQYKFWYV…LFVAVIMDNF (276 aa)) form an IV repeat. Residues 1226 to 1244 (PFEYMMFVLIMLNTLCLAM) traverse the membrane as a helical segment. The Extracellular segment spans residues 1245–1259 (QHYEQSKMFNDAMDI). Residues 1260 to 1279 (LNMVFTGVFTVEMVLKVIAF) traverse the membrane as a helical segment. The Cytoplasmic segment spans residues 1280–1286 (KPKGYFS). A helical membrane pass occupies residues 1287–1308 (DAWNTFDSLIVIGSIIDVALSE). The Extracellular portion of the chain corresponds to 1309-1333 (ADPSESETIPLPTATPGNSEESNRI). The helical transmembrane segment at 1334–1353 (SITFFRLFRVMRLVKLLSRG) threads the bilayer. The Cytoplasmic segment spans residues 1354–1372 (EGIRTLLWTFIKSFQALPY). A helical transmembrane segment spans residues 1373–1392 (VALLIAMLFFIYAVIGMQMF). At 1393 to 1459 (GKVAMRDNNQ…GEEYTCGSNF (67 aa)) the chain is on the extracellular side. The interval 1440 to 1506 (LCDPDSDYNP…LGPHHLDEFK (67 aa)) is dihydropyridine binding. Residues 1452 to 1495 (EYTCGSNFAIVYFISFYMLCAFLIINLFVAVIMDNFDYLTRDWS) form a phenylalkylamine binding region. Residues 1460 to 1484 (AIVYFISFYMLCAFLIINLFVAVIM) traverse the membrane as a helical segment. Residues 1485–2179 (DNFDYLTRDW…ADEMICITTL (695 aa)) lie on the Cytoplasmic side of the membrane. Disordered stretches follow at residues 1704–1789 (LLGN…AHGK), 1896–1941 (FERP…RSSF), and 2135–2171 (GDMG…DLAD). The segment covering 1764–1782 (SIGKQAPTSTNANLNNANM) has biased composition (polar residues). The segment covering 2156–2171 (SDEEPDPGREEEDLAD) has biased composition (acidic residues).

It belongs to the calcium channel alpha-1 subunit (TC 1.A.1.11) family. CACNA1D subfamily. As to quaternary structure, voltage-dependent calcium channels are multisubunit complexes, consisting of alpha-1, alpha-2, beta and delta subunits in a 1:1:1:1 ratio. The channel activity is directed by the pore-forming and voltage-sensitive alpha-1 subunit. In many cases, this subunit is sufficient to generate voltage-sensitive calcium channel activity. The auxiliary subunits beta and alpha-2/delta linked by a disulfide bridge regulate the channel activity. Interacts (via IQ domain) with CABP1 and CABP4 in a calcium independent manner. Interacts with RIMBP2. Expressed in the inner hair cells (IHC) of the cochlea.

Its subcellular location is the membrane. It carries out the reaction Ca(2+)(in) = Ca(2+)(out). Its function is as follows. Voltage-sensitive calcium channels (VSCC) mediate the entry of calcium ions into excitable cells and are also involved in a variety of calcium-dependent processes, including muscle contraction, hormone or neurotransmitter release, gene expression, cell motility, cell division and cell death. The isoform alpha-1D gives rise to L-type calcium currents. Long-lasting (L-type) calcium channels belong to the 'high-voltage activated' (HVA) group. They are blocked by dihydropyridines (DHP), phenylalkylamines, and by benzothiazepines. The chain is Voltage-dependent L-type calcium channel subunit alpha-1D (Cacna1d) from Mus musculus (Mouse).